We begin with the raw amino-acid sequence, 989 residues long: MAPPMTLQQWIIWKKMNKAHEALQNTTTVTEQQKEQIILDIQNEEVQPTRRDKFRYLLYTCCATSSRVLAWMFLVCILLIIVLVSCFVTISRIQWNKDIQVLGPVIDWNVTQRAVYQPLQTRRIARSLRMQHPVPKYVEVNMTSIPQGVYYEPHPEPIVVKERVLGLSQILMINSENIANNANLTQEVKKLLTEMVNEEMQSLSDVMIDFEIPLGDPRDQEQYIHRKCYQEFANCYLVKYKEPKPWPKEGLIADQCPLPGYHAGLTYNRQSIWDYYIKVESIRPANWTTKSKYGQARLGSFYIPSSLRQINVSHVLFCSDQLYSKWYNIENTIEQNERFLLNKLNNLTSGTSVLKKRALPKDWSSQGKNALFREINVLDICSKPESVILLNTSYYSFSLWEGDCNFTKDMISQLVPECDGFYNNSKWMHMHPYACRFWRSKKNEKEETKCRDGETKRCLYYPLWDSPESTYDFGYLAYQKNFPSPICIEQQKIRDQDYEVYSLYQERKIASKAYGIDTVLFSLKNFLNYTGTPVNEMPNARAFVGLIDPKFPPSYPNVTREHYTSCNNRKRRSVDNNYAKLRSMGYALTGAVQTLSQISDINDENLQQGIYLLRDHVITLMEATLHDISVMEGMFAVQHLHTHLNHLKTMLLERRIDWTYMSSTWLQQQLQKSDDEMKVIKRIARSLVYYVKQTHSSPTATAWEIGLYYELVIPKHIYLNNWNVVNIGHLVKSAGQLTHVTIAHPYEIINKECVETIYLHLEDCTRQDYVICDVVKIVQPCGNSSDTSDCPVWAEAVKEPFVQVNPLKNGSYLVLASSTDCQIPPYVPSIVTVNETTSCFGLDFKRPLVAEERLSFEPRLPNLQLRLPHLVGIIAKIKGIKIEVTSSGESIKEQIERAKAELLRLDIHEGDTPAWIQQLAAATKDVWPAAASALQGIGNFLSGTAQGIFGTAFSLLGYLKPILIGVGVILLVILIFKIVSWIPTKKKNQ.

The tract at residues 1–15 (MAPPMTLQQWIIWKK) is involved in virion budding. The Cytoplasmic portion of the chain corresponds to 1 to 65 (MAPPMTLQQW…YLLYTCCATS (65 aa)). Residues Lys14, Lys15, Lys18, Lys34, and Lys53 each participate in a glycyl lysine isopeptide (Lys-Gly) (interchain with G-Cter in ubiquitin) cross-link. A helical; Signal-anchor for type III membrane protein membrane pass occupies residues 66 to 88 (SRVLAWMFLVCILLIIVLVSCFV). Over 89 to 961 (TISRIQWNKD…AFSLLGYLKP (873 aa)) the chain is Lumenal. N-linked (GlcNAc...) asparagine; by host glycosylation is found at Asn109, Asn141, Asn183, Asn286, Asn311, Asn346, Asn391, Asn405, Asn423, Asn528, and Asn557. The segment at 577-599 (NYAKLRSMGYALTGAVQTLSQIS) is fusion peptide. Residues Asn783, Asn809, and Asn834 are each glycosylated (N-linked (GlcNAc...) asparagine; by host). The helical transmembrane segment at 962–982 (ILIGVGVILLVILIFKIVSWI) threads the bilayer. At 983-989 (PTKKKNQ) the chain is on the cytoplasmic side. Residues 985-987 (KKK) carry the Endoplasmic reticulum retention signal motif.

In terms of assembly, the mature envelope protein consists of a trimer of SU-TM heterodimers. The N-terminus of leader peptide specifically interacts with Gag protein. This specific interaction between Gag protein and Env glycoprotein may allow particle egress. In terms of processing, envelope glycoproteins are synthesized as an inactive precursor that is processed by host furin or a furin-like protease to yield a functional hetero-oligomeric complex. Post-translationally, the transmembrane protein and the surface protein are N-glycosylated. Mono- and polyubiquitinated leader peptide are found in viral particles. Ubiquitination may be involved in regulating the balance between viral and subviral particles release.

The protein localises to the host endoplasmic reticulum membrane. It is found in the virion membrane. Functionally, the surface protein (SU) attaches the virus to the host cell by binding to the cell receptor. This interaction triggers the refolding of transmembrane protein (TM) and is thought to activate its fusogenic potential by unmasking its fusion peptide. The transmembrane protein (TM) acts as a class I viral fusion protein. Under the current model, the protein has at least 3 conformational states: pre-fusion native state, pre-hairpin intermediate state, and post-fusion hairpin state. During viral and target cell membrane fusion, the coiled coil regions (heptad repeats) assume a trimer-of-hairpins structure, positioning the fusion peptide in close proximity to the C-terminal region of the ectodomain. The formation of this structure appears to drive apposition and subsequent fusion of viral and target cell membranes. Membranes fusion leads to delivery of the nucleocapsid into the cytoplasm. In terms of biological role, the leader peptide is a component of released, infectious virions and is required for particle budding. In Homo sapiens (Human), this protein is Envelope glycoprotein gp130 (env).